Here is a 628-residue protein sequence, read N- to C-terminus: MAAAAVDSAMEVVPALAEEAAPEVAGLSCLVNLPGEVLEYILCCGSLTAADIGRVSSTCRRLRELCQSSGKVWKEQFRVRWPSLMKHYSPTDYVNWLEEYKVRQKAGLEARKIVASFSKRFFSEHVPCNGFSDIENLEGPEIFFEDELVCILNMEGRKALTWKYYAKKILYYLRQQKILNNLKAFLQQPDDYESYLEGAVYIDQYCNPLSDISLKDIQAQIDSIVELVCKTLRGINSRHPSLAFKAGESSMIMEIELQSQVLDAMNYVLYDQLKFKGNRMDYYNALNLYMHQVLIRRTGIPISMSLLYLTIARQLGVPLEPVNFPSHFLLRWCQGAEGATLDIFDYIYIDAFGKGKQLTVKECEYLIGQHVTAALYGVVNVKKVLQRMVGNLLSLGKREGIDQSYQLLRDSLDLYLAMYPDQVQLLLLQARLYFHLGIWPEKSFCLVLKVLDILQHIQTLDPGQHGAVGYLVQHTLEHIERKKEEVGVEVKLRSDEKHRDVCYSIGLIMKHKRYGYNCVIYGWDPTCMMGHEWIRNMNVHSLPHGHHQPFYNVLVEDGSCRYAAQENLEYNVEPQEISHPDVGRYFSEFTGTHYIPNAELEIRYPEDLEFVYETVQNIYSAKKENIDE.

One can recognise an F-box domain in the interval 28-84 (SCLVNLPGEVLEYILCCGSLTAADIGRVSSTCRRLRELCQSSGKVWKEQFRVRWPSL).

As to quaternary structure, directly interacts with SKP1 and CUL1.

Its function is as follows. Substrate-recognition component of the SCF (SKP1-CUL1-F-box protein)-type E3 ubiquitin ligase complex. The polypeptide is F-box only protein 21 (FBXO21) (Homo sapiens (Human)).